Here is a 1569-residue protein sequence, read N- to C-terminus: Zinc finger protein GLI3 (1569 aa).

Composition is skewed to polar residues over residues 1–10 (MEAQSRSTTA) and 416–432 (AAQQNKPTSESAVSSTG). Disordered regions lie at residues 1–79 (MEAQ…STSS) and 414–461 (SEAA…DQPD). C2H2-type zinc fingers lie at residues 485 to 510 (TNCHWEGCSREFDTQEQLVHHINNDH), 518 to 545 (FVCRWLDCSREQKPFKAQYMLVVHMRRH), 551 to 575 (HKCTFEGCSKAYSRLENLKTHLRSH), 581 to 606 (YVCEHEGCNKAFSNASDRAKHQNRTH), and 612 to 637 (YVCKIPGCTKRYTDPSSLRKHVKTVH). Disordered regions lie at residues 625–731 (DPSS…YTNS), 899–921 (SYDPISTDASRRSSETSQCDGLP), 1202–1228 (PKSGLSQQRGYQHHTQNNPQAPQQNLD), and 1335–1364 (SNQTTSGQNGNTTDGTRSFLSTTQNGGEQQ). The span at 637 to 653 (HGPEAHVTKKQRGDIHP) shows a compositional bias: basic and acidic residues. Over residues 663 to 676 (SHSQSRSPGQQTQG) the composition is skewed to polar residues. The segment covering 678 to 704 (HGEHKDLSNTTSKHEECLQVRSVKTEK) has biased composition (basic and acidic residues). Residues 705 to 731 (PMSSQPSPGGKSSCSRQQSPISNYTNS) are compositionally biased toward polar residues. The span at 1335–1350 (SNQTTSGQNGNTTDGT) shows a compositional bias: low complexity. Polar residues predominate over residues 1352-1364 (SFLSTTQNGGEQQ).

Belongs to the GLI C2H2-type zinc-finger protein family. Post-translationally, phosphorylation is essential for its proteolytic processing. In terms of processing, the repressor form (GLI3R), a C-terminally truncated form is generated from the full-length GLI3 protein (GLI3FL) through proteolytic processing.

The protein localises to the nucleus. Its subcellular location is the cytoplasm. Has a dual function as a transcriptional activator and a repressor of the sonic hedgehog (Shh) pathway, and may play a role in limb development. May bind to the minimal GLI-consensus sequence 5'-GGGTGGTC-3'. Has an essential role in the early embryonic patterning of mesoderm and neuroectoderm. The protein is Zinc finger protein GLI3 (gli3) of Xenopus laevis (African clawed frog).